Reading from the N-terminus, the 269-residue chain is Shikimate dehydrogenase (NADP(+)) (269 aa).

Shikimate-binding positions include 17–19 and threonine 64; that span reads SKS. The Proton acceptor role is filled by lysine 68. Glutamate 80 provides a ligand contact to NADP(+). Shikimate is bound by residues asparagine 89 and aspartate 105. NADP(+) contacts are provided by residues 130 to 134, 154 to 159, and methionine 213; these read GAGGA and NRTRAK. Residue tyrosine 215 coordinates shikimate. Glycine 237 contributes to the NADP(+) binding site.

It belongs to the shikimate dehydrogenase family. In terms of assembly, homodimer.

The catalysed reaction is shikimate + NADP(+) = 3-dehydroshikimate + NADPH + H(+). It functions in the pathway metabolic intermediate biosynthesis; chorismate biosynthesis; chorismate from D-erythrose 4-phosphate and phosphoenolpyruvate: step 4/7. Involved in the biosynthesis of the chorismate, which leads to the biosynthesis of aromatic amino acids. Catalyzes the reversible NADPH linked reduction of 3-dehydroshikimate (DHSA) to yield shikimate (SA). This Neisseria meningitidis serogroup C / serotype 2a (strain ATCC 700532 / DSM 15464 / FAM18) protein is Shikimate dehydrogenase (NADP(+)).